Here is a 492-residue protein sequence, read N- to C-terminus: MLIDSLHISFDSFNFESILPMLVLVCGGIFTLLINAFTSRFSRNLNMFLCMLFLVLDFLVVLGLEQQENAFFGFLSLDTLSLVSQSIVLISAFLLIFLALSKERFNEFQTAEFYPLYLFIIAGFQFMVSSNHLLLMLIGLETASLPICVLMALSGKRYGLEAGIKYFTMGAMASAFFAMGAMAFYLLTGSLNLEVITLYLYTEGVTNPMLFAMGVIFLIGAIGFKVSLVPFHTWMPDVYEGNNPVFASYISIVPKIAGFVVATRLFGAFIDTRIAWVEDIFYALILITITIPNLIALWQEDVKRMLAYSSISHSGFALACVFIHTEESQKAMFVYWFMFAFTYIGAFGLLWLLKSREKTWDERYDHPYSKFDGLIKTHPLVAILGAIFVFGLAGIPPFSVFWGKFLAVESALESNHILLAAVMLANSAVAVFYYFRWLVAMFFNKPLQTQSYAESDIYTQNATMPIYAVIIAMALVCLFSVFMMRGLLEFVA.

14 consecutive transmembrane segments (helical) span residues I18–T38, L45–E65, L80–L100, F108–V128, L133–L153, F167–L187, M209–V229, I250–I270, V277–L297, M305–T325, F333–L353, V381–F401, N415–F435, and M464–M484.

This sequence belongs to the complex I subunit 2 family. As to quaternary structure, NDH-1 is composed of 14 different subunits. Subunits NuoA, H, J, K, L, M, N constitute the membrane sector of the complex.

Its subcellular location is the cell inner membrane. The enzyme catalyses a quinone + NADH + 5 H(+)(in) = a quinol + NAD(+) + 4 H(+)(out). NDH-1 shuttles electrons from NADH, via FMN and iron-sulfur (Fe-S) centers, to quinones in the respiratory chain. The immediate electron acceptor for the enzyme in this species is believed to be ubiquinone. Couples the redox reaction to proton translocation (for every two electrons transferred, four hydrogen ions are translocated across the cytoplasmic membrane), and thus conserves the redox energy in a proton gradient. In Helicobacter acinonychis (strain Sheeba), this protein is NADH-quinone oxidoreductase subunit N.